Here is a 121-residue protein sequence, read N- to C-terminus: Large ribosomal subunit protein bL19 (121 aa).

The protein belongs to the bacterial ribosomal protein bL19 family.

Its function is as follows. This protein is located at the 30S-50S ribosomal subunit interface and may play a role in the structure and function of the aminoacyl-tRNA binding site. The sequence is that of Large ribosomal subunit protein bL19 from Acidothermus cellulolyticus (strain ATCC 43068 / DSM 8971 / 11B).